The following is a 146-amino-acid chain: Leghemoglobin Lb120-29 (146 aa).

One can recognise a Globin domain in the interval 2 to 146 (GFTDKQEALV…LASAIKKAMS (145 aa)). 2 positions are modified to nitrated tyrosine: Tyr-24 and Tyr-29. Ser-44 serves as a coordination point for heme b. At Ser-44 the chain carries Phosphoserine. His-61 provides a ligand contact to O2. Heme b-binding residues include Lys-64, His-93, and Lys-96. The residue at position 134 (Tyr-134) is a Nitrated tyrosine.

Belongs to the plant globin family. In terms of assembly, monomer. In terms of processing, nitrated in effective nodules and particularly in hypoxic conditions; this mechanism may play a protective role in the symbiosis by buffering toxic peroxynitrite NO(2)(-). Nitration level decrease during nodule senescence. Post-translationally, phosphorylation at Ser-44 disrupts the molecular environment of its porphyrin ring oxygen binding pocket, thus leading to a reduced oxygen consumption and to the delivery of oxygen O(2) to symbiosomes. Root nodules.

The protein localises to the cytoplasm. Its subcellular location is the cytosol. It is found in the nucleus. Functionally, leghemoglobin that reversibly binds oxygen O(2) through a pentacoordinated heme iron. In root nodules, facilitates the diffusion of oxygen to the bacteroids while preventing the bacterial nitrogenase from being inactivated by buffering dioxygen, nitric oxide and carbon monoxide, and promoting the formation of reactive oxygen species (ROS, e.g. H(2)O(2)). This role is essential for symbiotic nitrogen fixation (SNF). This Pisum sativum (Garden pea) protein is Leghemoglobin Lb120-29.